Here is a 122-residue protein sequence, read N- to C-terminus: Large ribosomal subunit protein uL14 (122 aa).

It belongs to the universal ribosomal protein uL14 family. As to quaternary structure, part of the 50S ribosomal subunit. Forms a cluster with proteins L3 and L19. In the 70S ribosome, L14 and L19 interact and together make contacts with the 16S rRNA in bridges B5 and B8.

Its function is as follows. Binds to 23S rRNA. Forms part of two intersubunit bridges in the 70S ribosome. The sequence is that of Large ribosomal subunit protein uL14 from Methylorubrum populi (strain ATCC BAA-705 / NCIMB 13946 / BJ001) (Methylobacterium populi).